A 68-amino-acid polypeptide reads, in one-letter code: C-hordein (68 aa).

2 stretches are compositionally biased toward pro residues: residues 1–24 (YPQQPQPFPQQPIPQQPQPYPQQP) and 33–55 (PQQPQPYPQQPQPFPQQPIPLQP). Positions 1–68 (YPQQPQPFPQ…YTQQTIWSMV (68 aa)) are disordered. Positions 59–68 (YTQQTIWSMV) are enriched in polar residues.

In terms of tissue distribution, developing endosperm.

Functionally, sulfur-poor seed storage protein. In Hordeum vulgare (Barley), this protein is C-hordein.